A 200-amino-acid polypeptide reads, in one-letter code: MKHAPLVDQLINAFTCLPGVGPRSAQRMAYALLDRGRESGRRLGDALHAAMDGVQHCERCRNYAQSTLCPVCEDPRRDASLVCIVATPGDVLAFEQSGEYRGQYFVLMGELSPLDGIGPRELGLDVLEQRLNEGQISELILATGTTVEGEATAHYVLGLAQDAGVGVSRIAQGVPMGGELEFVDGATLAQALKGRRPFDA.

The C4-type zinc finger occupies 57–72 (CERCRNYAQSTLCPVC). Residues 80-175 (SLVCIVATPG…GVSRIAQGVP (96 aa)) form the Toprim domain.

This sequence belongs to the RecR family.

Functionally, may play a role in DNA repair. It seems to be involved in an RecBC-independent recombinational process of DNA repair. It may act with RecF and RecO. The sequence is that of Recombination protein RecR from Alcanivorax borkumensis (strain ATCC 700651 / DSM 11573 / NCIMB 13689 / SK2).